Consider the following 142-residue polypeptide: Large ribosomal subunit protein uL13 (142 aa).

It belongs to the universal ribosomal protein uL13 family. Part of the 50S ribosomal subunit.

Functionally, this protein is one of the early assembly proteins of the 50S ribosomal subunit, although it is not seen to bind rRNA by itself. It is important during the early stages of 50S assembly. The protein is Large ribosomal subunit protein uL13 of Desulfotalea psychrophila (strain LSv54 / DSM 12343).